A 244-amino-acid polypeptide reads, in one-letter code: Venom nerve growth factor 3 (244 aa).

An N-terminal signal peptide occupies residues 1-18 (MSMLCYTLIIAFLIGIWA). The propeptide occupies 19–125 (APKSEDNVPL…TLNRNIRAKR (107 aa)). Residues 47 to 66 (GLKTSRNTDQRHPAPKKAED) are compositionally biased toward basic and acidic residues. The segment at 47-67 (GLKTSRNTDQRHPAPKKAEDQ) is disordered. 3 cysteine pairs are disulfide-bonded: cysteine 139-cysteine 205, cysteine 181-cysteine 233, and cysteine 193-cysteine 235.

Belongs to the NGF-beta family. In terms of assembly, homodimer; non-covalently linked. As to expression, expressed by the venom gland.

The protein resides in the secreted. In terms of biological role, nerve growth factor is important for the development and maintenance of the sympathetic and sensory nervous systems. It stimulates division and differentiation of sympathetic and embryonic sensory neurons as well as basal forebrain cholinergic neurons in the brain. Its relevance in the snake venom is not clear. However, it has been shown to inhibit metalloproteinase-dependent proteolysis of platelet glycoprotein Ib alpha, suggesting a metalloproteinase inhibition to prevent metalloprotease autodigestion and/or protection against prey proteases. Binds a lipid between the two protein chains in the homodimer. The lipid-bound form promotes histamine relase from mouse mast cells, contrary to the lipid-free form. This chain is Venom nerve growth factor 3, found in Notechis scutatus scutatus (Mainland tiger snake).